The primary structure comprises 420 residues: Serine/threonine transporter SstT (420 aa).

Helical transmembrane passes span 14-34 (IMIG…WTFI), 40-60 (LFVG…IIAS), 71-91 (YVGS…VVAV), 172-192 (ITTV…GLVF), 210-230 (LLLL…AIVF), 283-303 (IPLG…IMTL), 309-329 (LGMS…AVSA), 332-352 (ASGI…LFGI), and 356-376 (IAMQ…SIET).

The protein belongs to the dicarboxylate/amino acid:cation symporter (DAACS) (TC 2.A.23) family.

The protein resides in the cell membrane. It carries out the reaction L-serine(in) + Na(+)(in) = L-serine(out) + Na(+)(out). It catalyses the reaction L-threonine(in) + Na(+)(in) = L-threonine(out) + Na(+)(out). Involved in the import of serine and threonine into the cell, with the concomitant import of sodium (symport system). In Enterococcus faecalis (strain ATCC 700802 / V583), this protein is Serine/threonine transporter SstT.